The chain runs to 138 residues: Beta-lactamase HcpB (138 aa).

3 TPR repeats span residues 1–28 (MVGGGTVKKDLKKAIQYYVKACELNEMF), 57–94 (GNGCRFLGDFYENGKYVKKDLRKAAQYYSKACGLNDQD), and 97–130 (LILGYKQYAGKGVVKNEKQAVKTFEKACRLGSED). 4 disulfides stabilise this stretch: cysteine 22-cysteine 30, cysteine 52-cysteine 60, cysteine 88-cysteine 96, and cysteine 124-cysteine 132.

This sequence belongs to the hcp beta-lactamase family.

The enzyme catalyses a beta-lactam + H2O = a substituted beta-amino acid. Functionally, hydrolyzes 6-aminopenicillinic acid and 7-aminocephalosporanic acid (ACA) derivatives. This chain is Beta-lactamase HcpB (hcpB), found in Helicobacter pylori (strain ATCC 700392 / 26695) (Campylobacter pylori).